An 802-amino-acid chain; its full sequence is Chromosome alignment-maintaining phosphoprotein 1 (802 aa).

The residue at position 1 (M1) is an N-acetylmethionine. The segment covering 88–105 has biased composition (basic and acidic residues); it reads SDKWSEQPKEQPSKDTES. Positions 88–475 are disordered; it reads SDKWSEQPKE…PDLWKSSFIM (388 aa). S108 carries the phosphoserine modification. A compositionally biased stretch (polar residues) spans 135–148; it reads QKTSPSLCPESQAS. Over residues 185 to 203 the composition is skewed to basic and acidic residues; the sequence is ERVDPPCELPELEKPERGP. S204, S207, S234, S237, S243, S252, S254, S265, S272, S276, S298, S309, S334, S345, and S365 each carry phosphoserine. Residues 261–479 are mediates interaction with MAD2L2; sequence ARTASPEPRK…KSSFIMESQK (219 aa). Positions 332–351 are enriched in pro residues; that stretch reads PMSPGPWKPIPSVSPGPWKP. The segment covering 354-368 has biased composition (low complexity); that stretch reads SMSTASWKSSVSSGS. Residues 369–378 are compositionally biased toward polar residues; the sequence is WKTPPTSPES. T371 carries the phosphothreonine modification. Phosphoserine occurs at positions 375, 394, 405, 416, 421, 425, 432, 434, and 441. The tract at residues 440-580 is mediates localization to the spindle and the kinetochore and is required for the attachment of spindle microtubules to the kinetochore; the sequence is VSPDQRKTSP…EIQLEAVDNA (141 aa). A Phosphothreonine modification is found at T447. S448, S451, and S461 each carry phosphoserine. Position 479 is an N6-acetyllysine; alternate (K479). Residue K479 forms a Glycyl lysine isopeptide (Lys-Gly) (interchain with G-Cter in SUMO2); alternate linkage. 3 positions are modified to phosphoserine: S497, S502, and S532. A Glycyl lysine isopeptide (Lys-Gly) (interchain with G-Cter in SUMO2) cross-link involves residue K555. The tract at residues 581-802 is mediates localization to the chromosome and the spindle and negatively regulates chromosome alignment; that stretch reads KCDSLAQEGL…LESPLEEQQI (222 aa). A Phosphothreonine modification is found at T593. Residue K596 forms a Glycyl lysine isopeptide (Lys-Gly) (interchain with G-Cter in SUMO2) linkage. Phosphoserine occurs at positions 603, 605, 617, 622, 641, 642, and 643. A disordered region spans residues 603 to 625; the sequence is SPSSKKLKKDSQENSDAELSSSE. A Glycyl lysine isopeptide (Lys-Gly) (interchain with G-Cter in SUMO2) cross-link involves residue K660. At S665 the chain carries Phosphoserine. K679 participates in a covalent cross-link: Glycyl lysine isopeptide (Lys-Gly) (interchain with G-Cter in SUMO2). S726 is modified (phosphoserine). The C2H2-type zinc-finger motif lies at 728-750; sequence YKCTICGKAFLLESLLKNHVAAH.

In terms of assembly, interacts with MAD2L2. Interacts with POGZ, CBX1, CBX3 and CBX5. In terms of processing, phosphorylated by CDK1. Mitotic phosphorylation is required for the attachment of spindle microtubules to the kinetochore.

Its subcellular location is the nucleus. It localises to the chromosome. The protein localises to the centromere. It is found in the kinetochore. The protein resides in the cytoplasm. Its subcellular location is the cytoskeleton. It localises to the spindle. Its function is as follows. Required for proper alignment of chromosomes at metaphase and their accurate segregation during mitosis. Involved in the maintenance of spindle microtubules attachment to the kinetochore during sister chromatid biorientation. May recruit CENPE and CENPF to the kinetochore. This chain is Chromosome alignment-maintaining phosphoprotein 1 (Champ1), found in Mus musculus (Mouse).